The sequence spans 127 residues: Ribosome-binding factor A (127 aa).

The protein belongs to the RbfA family. As to quaternary structure, monomer. Binds 30S ribosomal subunits, but not 50S ribosomal subunits or 70S ribosomes.

The protein resides in the cytoplasm. In terms of biological role, one of several proteins that assist in the late maturation steps of the functional core of the 30S ribosomal subunit. Associates with free 30S ribosomal subunits (but not with 30S subunits that are part of 70S ribosomes or polysomes). Required for efficient processing of 16S rRNA. May interact with the 5'-terminal helix region of 16S rRNA. This Aromatoleum aromaticum (strain DSM 19018 / LMG 30748 / EbN1) (Azoarcus sp. (strain EbN1)) protein is Ribosome-binding factor A.